A 460-amino-acid polypeptide reads, in one-letter code: Exodeoxyribonuclease 7 large subunit (460 aa).

A disordered region spans residues 438–460 (ARVEKVNREEEKQSGSQKNGTRD). The span at 439 to 450 (RVEKVNREEEKQ) shows a compositional bias: basic and acidic residues. Positions 451–460 (SGSQKNGTRD) are enriched in polar residues.

The protein belongs to the XseA family. In terms of assembly, heterooligomer composed of large and small subunits.

Its subcellular location is the cytoplasm. The enzyme catalyses Exonucleolytic cleavage in either 5'- to 3'- or 3'- to 5'-direction to yield nucleoside 5'-phosphates.. Bidirectionally degrades single-stranded DNA into large acid-insoluble oligonucleotides, which are then degraded further into small acid-soluble oligonucleotides. This chain is Exodeoxyribonuclease 7 large subunit, found in Brevibacillus brevis (strain 47 / JCM 6285 / NBRC 100599).